A 530-amino-acid chain; its full sequence is Sulfate adenylyltransferase (530 aa).

The segment at 1–178 (MPIPAPHGGK…IQGLDYPTHY (178 aa)) is N-terminal. The interval 179–410 (DYIPFRKTPT…LRESNPPRSK (232 aa)) is catalytic. Q208 lines the sulfate pocket. ATP-binding positions include 208 to 211 (QTRN) and 304 to 307 (GRDH). Catalysis depends on residues T209, R210, and N211. R210 is a binding site for sulfate. Residue A308 participates in sulfate binding. V348 provides a ligand contact to ATP. Residues 411-530 (QGFAIVIDSS…LVSQGFYQQS (120 aa)) are required for oligomerization; adenylyl-sulfate kinase-like.

Belongs to the sulfate adenylyltransferase family. Homohexamer. Dimer of trimers.

The protein localises to the cytoplasm. It carries out the reaction sulfate + ATP + H(+) = adenosine 5'-phosphosulfate + diphosphate. The protein operates within sulfur metabolism; hydrogen sulfide biosynthesis; sulfite from sulfate: step 1/3. In terms of biological role, catalyzes the first intracellular reaction of sulfate assimilation, forming adenosine-5'-phosphosulfate (APS) from inorganic sulfate and ATP. Plays an important role in sulfate activation as a component of the biosynthesis pathway of sulfur-containing amino acids. The chain is Sulfate adenylyltransferase from Debaryomyces hansenii (strain ATCC 36239 / CBS 767 / BCRC 21394 / JCM 1990 / NBRC 0083 / IGC 2968) (Yeast).